The sequence spans 595 residues: Aspartate--tRNA(Asp/Asn) ligase (595 aa).

Glutamate 175 contacts L-aspartate. Residues 199 to 202 (QQYK) are aspartate. L-aspartate-binding residues include arginine 221 and histidine 454. 221 to 223 (RDE) contributes to the ATP binding site. Position 488 (glutamate 488) interacts with ATP. Arginine 495 is an L-aspartate binding site. ATP is bound at residue 540–543 (GIDR).

This sequence belongs to the class-II aminoacyl-tRNA synthetase family. Type 1 subfamily. Homodimer.

It is found in the cytoplasm. The enzyme catalyses tRNA(Asx) + L-aspartate + ATP = L-aspartyl-tRNA(Asx) + AMP + diphosphate. Functionally, aspartyl-tRNA synthetase with relaxed tRNA specificity since it is able to aspartylate not only its cognate tRNA(Asp) but also tRNA(Asn). Reaction proceeds in two steps: L-aspartate is first activated by ATP to form Asp-AMP and then transferred to the acceptor end of tRNA(Asp/Asn). This is Aspartate--tRNA(Asp/Asn) ligase from Brucella canis (strain ATCC 23365 / NCTC 10854 / RM-666).